The following is a 795-amino-acid chain: Phenylalanine--tRNA ligase beta subunit (795 aa).

Positions 39–148 constitute a tRNA-binding domain; sequence AGEFTGVKVG…EGTTLGADVR (110 aa). In terms of domain architecture, B5 spans 401–476; it reads PKANTVELRR…RIYGYNNIPN (76 aa). The Mg(2+) site is built by D454, D460, E463, and E464. Residues 701-794 form the FDX-ACB domain; it reads SKFPANRRDI…IGEKFSATLR (94 aa).

The protein belongs to the phenylalanyl-tRNA synthetase beta subunit family. Type 1 subfamily. Tetramer of two alpha and two beta subunits. It depends on Mg(2+) as a cofactor.

The protein resides in the cytoplasm. The catalysed reaction is tRNA(Phe) + L-phenylalanine + ATP = L-phenylalanyl-tRNA(Phe) + AMP + diphosphate + H(+). In Aliivibrio fischeri (strain ATCC 700601 / ES114) (Vibrio fischeri), this protein is Phenylalanine--tRNA ligase beta subunit.